Here is a 109-residue protein sequence, read N- to C-terminus: Large ribosomal subunit protein uL22 (109 aa).

The protein belongs to the universal ribosomal protein uL22 family. As to quaternary structure, part of the 50S ribosomal subunit.

In terms of biological role, this protein binds specifically to 23S rRNA; its binding is stimulated by other ribosomal proteins, e.g. L4, L17, and L20. It is important during the early stages of 50S assembly. It makes multiple contacts with different domains of the 23S rRNA in the assembled 50S subunit and ribosome. The globular domain of the protein is located near the polypeptide exit tunnel on the outside of the subunit, while an extended beta-hairpin is found that lines the wall of the exit tunnel in the center of the 70S ribosome. The sequence is that of Large ribosomal subunit protein uL22 from Aromatoleum aromaticum (strain DSM 19018 / LMG 30748 / EbN1) (Azoarcus sp. (strain EbN1)).